A 571-amino-acid chain; its full sequence is Proline--tRNA ligase (571 aa).

Belongs to the class-II aminoacyl-tRNA synthetase family. ProS type 1 subfamily. Homodimer.

It is found in the cytoplasm. It catalyses the reaction tRNA(Pro) + L-proline + ATP = L-prolyl-tRNA(Pro) + AMP + diphosphate. Its function is as follows. Catalyzes the attachment of proline to tRNA(Pro) in a two-step reaction: proline is first activated by ATP to form Pro-AMP and then transferred to the acceptor end of tRNA(Pro). As ProRS can inadvertently accommodate and process non-cognate amino acids such as alanine and cysteine, to avoid such errors it has two additional distinct editing activities against alanine. One activity is designated as 'pretransfer' editing and involves the tRNA(Pro)-independent hydrolysis of activated Ala-AMP. The other activity is designated 'posttransfer' editing and involves deacylation of mischarged Ala-tRNA(Pro). The misacylated Cys-tRNA(Pro) is not edited by ProRS. The sequence is that of Proline--tRNA ligase from Buchnera aphidicola subsp. Schizaphis graminum (strain Sg).